Here is a 124-residue protein sequence, read N- to C-terminus: T cell receptor beta variable 13 (124 aa).

The signal sequence occupies residues 1 to 31 (MLSPDLPDSAWNTRLLCRVMLCLLGAGSVAA). The 93-residue stretch at 32–124 (GVIQSPRHLI…SALYFCASSL (93 aa)) folds into the Ig-like domain. A disulfide bridge connects residues cysteine 52 and cysteine 120. Asparagine 106 carries an N-linked (GlcNAc...) asparagine glycan.

As to quaternary structure, alpha-beta TR is a heterodimer composed of an alpha and beta chain; disulfide-linked. The alpha-beta TR is associated with the transmembrane signaling CD3 coreceptor proteins to form the TR-CD3 (TcR or TCR). The assembly of alpha-beta TR heterodimers with CD3 occurs in the endoplasmic reticulum where a single alpha-beta TR heterodimer associates with one CD3D-CD3E heterodimer, one CD3G-CD3E heterodimer and one CD247 homodimer forming a stable octameric structure. CD3D-CD3E and CD3G-CD3E heterodimers preferentially associate with TR alpha and TR beta chains, respectively. The association of the CD247 homodimer is the last step of TcR assembly in the endoplasmic reticulum and is required for transport to the cell surface.

It is found in the cell membrane. Functionally, v region of the variable domain of T cell receptor (TR) beta chain that participates in the antigen recognition. Alpha-beta T cell receptors are antigen specific receptors which are essential to the immune response and are present on the cell surface of T lymphocytes. Recognize peptide-major histocompatibility (MH) (pMH) complexes that are displayed by antigen presenting cells (APC), a prerequisite for efficient T cell adaptive immunity against pathogens. Binding of alpha-beta TR to pMH complex initiates TR-CD3 clustering on the cell surface and intracellular activation of LCK that phosphorylates the ITAM motifs of CD3G, CD3D, CD3E and CD247 enabling the recruitment of ZAP70. In turn ZAP70 phosphorylates LAT, which recruits numerous signaling molecules to form the LAT signalosome. The LAT signalosome propagates signal branching to three major signaling pathways, the calcium, the mitogen-activated protein kinase (MAPK) kinase and the nuclear factor NF-kappa-B (NF-kB) pathways, leading to the mobilization of transcription factors that are critical for gene expression and essential for T cell growth and differentiation. The T cell repertoire is generated in the thymus, by V-(D)-J rearrangement. This repertoire is then shaped by intrathymic selection events to generate a peripheral T cell pool of self-MH restricted, non-autoaggressive T cells. Post-thymic interaction of alpha-beta TR with the pMH complexes shapes TR structural and functional avidity. The polypeptide is T cell receptor beta variable 13 (Homo sapiens (Human)).